Here is a 569-residue protein sequence, read N- to C-terminus: MAGGVDGPIGIPFPDHSSDILSGLNEQRTQGLLCDVVILVEGREFPTHRSVLAACSQYFKKLFTSGAVVDQQNVYEIDFVSAEALTALMDFAYTATLTVSTANVGDILSAARLLEIPAVSHVCADLLERQILAADDVGDASQPDGAGPTDQRNLLRAKEYLEFFRSNPMNSLPPTAFPWSGFGAPDDDLDATKEAVAAAVAAVAAGDCNGLDFYGPGPPADRPPAGDGDEGDSTPGLWPERDEDAPPGGLFPPPTAPPATTQNGHYGRAGAGTGEEEAAALSEAAPEPGDSPGFLSGAAEGEDGDAADVDGLAASTLLQQMMSSVGRAGDSDEESRTDDKGVMDYYLKYFSGAHEGDVYPAWSQKGEKKIRAKAFQKCPICEKVIQGAGKLPRHIRTHTGEKPYECNICKVRFTRQDKLKVHMRKHTGEKPYLCQQCGAAFAHNYDLKNHMRVHTGLRPYQCDSCCKTFVRSDHLHRHLKKDGCNGVPSRRGRKPRVRGVPPDVPAGAGAPPGLPDAPRNGQEKHFKDEEEDEEEASPDGSGRLNVAGSGGDDGAGGPAVATAEGNFAT.

Residues 34 to 101 (CDVVILVEGR…AYTATLTVST (68 aa)) form the BTB domain. Positions 214–304 (YGPGPPADRP…LSGAAEGEDG (91 aa)) are disordered. The tract at residues 275-569 (EEEAAALSEA…VATAEGNFAT (295 aa)) is mediates interaction with KHDRBS1. Positions 279 to 288 (AALSEAAPEP) are enriched in low complexity. Ser331 and Ser335 each carry phosphoserine. The segment at 343–569 (MDYYLKYFSG…VATAEGNFAT (227 aa)) is mediates interaction with RELA. Residues 371 to 569 (RAKAFQKCPI…VATAEGNFAT (199 aa)) are mediates interaction with SMAD4. 2 C2H2-type zinc fingers span residues 376-398 (QKCPICEKVIQGAGKLPRHIRTH) and 404-426 (YECNICKVRFTRQDKLKVHMRKH). Lys430 is covalently cross-linked (Glycyl lysine isopeptide (Lys-Gly) (interchain with G-Cter in SUMO2)). The segment at 432-454 (YLCQQCGAAFAHNYDLKNHMRVH) adopts a C2H2-type 3 zinc-finger fold. Residues 460–484 (YQCDSCCKTFVRSDHLHRHLKKDGC) form a C2H2-type 4; atypical zinc finger. A disordered region spans residues 480–569 (KKDGCNGVPS…VATAEGNFAT (90 aa)). A compositionally biased stretch (low complexity) spans 498–519 (RGVPPDVPAGAGAPPGLPDAPR). Residue Lys527 forms a Glycyl lysine isopeptide (Lys-Gly) (interchain with G-Cter in SUMO2) linkage. A Phosphoserine modification is found at Ser537. A compositionally biased stretch (gly residues) spans 548–557 (GSGGDDGAGG).

In terms of assembly, homodimer. Interacts with BCL6. Interacts with RELA; involved in the control by RELA of the accessibility of target gene promoters. Interacts with AR (via NR LBD domain); the interaction is direct and androgen-dependent. Interacts with NCOR1. Interacts with NCOR2. Interacts with SMAD4; the interaction is direct and stimulated by TGFB1. Interacts with HDAC1. Interacts with SP1; ZBTB7A prevents the binding to GC-rich motifs in promoters and represses the transcriptional activity of SP1. Interacts with the DNA-dependent protein kinase complex/DNA-PKc. Interacts with KHDRBS1; negatively regulates KHDRBS1 splicing activity. In terms of processing, sumoylated. Undergoes sumoylation with SUMO1 that may regulate its transcriptional activity. In terms of tissue distribution, widely expressed. In normal thymus, expressed in medullary epithelial cells and Hassle's corpuscles (at protein level). In the spleen, mainly expressed in the white pulp germinal centers (at protein level). Up-regulated in thymic lymphomas.

The protein localises to the nucleus. Its function is as follows. Transcription factor that represses the transcription of a wide range of genes involved in cell proliferation and differentiation. Directly and specifically binds to the consensus sequence 5'-[GA][CA]GACCCCCCCCC-3' and represses transcription both by regulating the organization of chromatin and through the direct recruitment of transcription factors to gene regulatory regions. Negatively regulates SMAD4 transcriptional activity in the TGF-beta signaling pathway through these two mechanisms. That is, recruits the chromatin regulator HDAC1 to the SMAD4-DNA complex and in parallel prevents the recruitment of the transcriptional activators CREBBP and EP300. Collaborates with transcription factors like RELA to modify the accessibility of gene transcription regulatory regions to secondary transcription factors. Also directly interacts with transcription factors like SP1 to prevent their binding to DNA. Functions as an androgen receptor/AR transcriptional corepressor by recruiting NCOR1 and NCOR2 to the androgen response elements/ARE on target genes. Thereby, negatively regulates androgen receptor signaling and androgen-induced cell proliferation. Involved in the switch between fetal and adult globin expression during erythroid cells maturation. Through its interaction with the NuRD complex regulates chromatin at the fetal globin genes to repress their transcription. Specifically represses the transcription of the tumor suppressor ARF isoform from the CDKN2A gene. Efficiently abrogates E2F1-dependent CDKN2A transactivation. Regulates chondrogenesis through the transcriptional repression of specific genes via a mechanism that also requires histone deacetylation. Regulates cell proliferation through the transcriptional regulation of genes involved in glycolysis. Involved in adipogenesis through the regulation of genes involved in adipocyte differentiation. Plays a key role in the differentiation of lymphoid progenitors into B and T lineages. Promotes differentiation towards the B lineage by inhibiting the T-cell instructive Notch signaling pathway through the specific transcriptional repression of Notch downstream target genes. Also regulates osteoclast differentiation. May also play a role, independently of its transcriptional activity, in double-strand break repair via classical non-homologous end joining/cNHEJ. Recruited to double-strand break sites on damage DNA, interacts with the DNA-dependent protein kinase complex and directly regulates its stability and activity in DNA repair. May also modulate the splicing activity of KHDRBS1 toward BCL2L1 in a mechanism which is histone deacetylase-dependent and thereby negatively regulates the pro-apoptotic effect of KHDRBS1. In Mus musculus (Mouse), this protein is Zinc finger and BTB domain-containing protein 7A.